A 149-amino-acid polypeptide reads, in one-letter code: Large ribosomal subunit protein bL9 (149 aa).

This sequence belongs to the bacterial ribosomal protein bL9 family.

Functionally, binds to the 23S rRNA. This is Large ribosomal subunit protein bL9 from Thermotoga sp. (strain RQ2).